We begin with the raw amino-acid sequence, 374 residues long: Chaperone protein DnaJ (374 aa).

The J domain occupies Ser-4–Gly-69. The CR-type zinc finger occupies Gly-136–Lys-213. Residues Cys-149, Cys-152, Cys-165, Cys-168, Cys-187, Cys-190, Cys-201, and Cys-204 each coordinate Zn(2+). 4 CXXCXGXG motif repeats span residues Cys-149–Gly-156, Cys-165–Gly-172, Cys-187–Gly-194, and Cys-201–Gly-208.

The protein belongs to the DnaJ family. Homodimer. It depends on Zn(2+) as a cofactor.

It is found in the cytoplasm. Its function is as follows. Participates actively in the response to hyperosmotic and heat shock by preventing the aggregation of stress-denatured proteins and by disaggregating proteins, also in an autonomous, DnaK-independent fashion. Unfolded proteins bind initially to DnaJ; upon interaction with the DnaJ-bound protein, DnaK hydrolyzes its bound ATP, resulting in the formation of a stable complex. GrpE releases ADP from DnaK; ATP binding to DnaK triggers the release of the substrate protein, thus completing the reaction cycle. Several rounds of ATP-dependent interactions between DnaJ, DnaK and GrpE are required for fully efficient folding. Also involved, together with DnaK and GrpE, in the DNA replication of plasmids through activation of initiation proteins. The sequence is that of Chaperone protein DnaJ from Campylobacter jejuni subsp. jejuni serotype O:6 (strain 81116 / NCTC 11828).